The primary structure comprises 110 residues: uncharacterized protein (110 aa).

It to M.jannaschii MJ0123 and A.aeolicus AA15.

This is an uncharacterized protein from Methanocaldococcus jannaschii (strain ATCC 43067 / DSM 2661 / JAL-1 / JCM 10045 / NBRC 100440) (Methanococcus jannaschii).